The primary structure comprises 511 residues: Putative thymidine phosphorylase (511 aa).

This sequence belongs to the thymidine/pyrimidine-nucleoside phosphorylase family. Type 2 subfamily.

The enzyme catalyses thymidine + phosphate = 2-deoxy-alpha-D-ribose 1-phosphate + thymine. In Bradyrhizobium sp. (strain BTAi1 / ATCC BAA-1182), this protein is Putative thymidine phosphorylase.